The sequence spans 191 residues: Protein Ves (191 aa).

The protein belongs to the Ves family.

In Escherichia coli (strain SMS-3-5 / SECEC), this protein is Protein Ves.